The following is a 308-amino-acid chain: tRNA pseudouridine synthase B (308 aa).

The active-site Nucleophile is aspartate 33.

The protein belongs to the pseudouridine synthase TruB family. Type 1 subfamily.

The enzyme catalyses uridine(55) in tRNA = pseudouridine(55) in tRNA. Its function is as follows. Responsible for synthesis of pseudouridine from uracil-55 in the psi GC loop of transfer RNAs. The protein is tRNA pseudouridine synthase B of Nitrosomonas europaea (strain ATCC 19718 / CIP 103999 / KCTC 2705 / NBRC 14298).